A 130-amino-acid chain; its full sequence is Large ribosomal subunit protein bL19 (130 aa).

This sequence belongs to the bacterial ribosomal protein bL19 family.

Its function is as follows. This protein is located at the 30S-50S ribosomal subunit interface and may play a role in the structure and function of the aminoacyl-tRNA binding site. The polypeptide is Large ribosomal subunit protein bL19 (Psychrobacter arcticus (strain DSM 17307 / VKM B-2377 / 273-4)).